Consider the following 254-residue polypeptide: Sec-independent protein translocase protein TatCy (254 aa).

6 helical membrane-spanning segments follow: residues 24–44 (IVAL…KPII), 67–87 (LYVF…PVIL), 112–132 (VSIL…FPFV), 157–177 (FLLQ…ILMF), 187–207 (MFLA…AALI), and 212–232 (LLSH…SILI).

This sequence belongs to the TatC family. As to quaternary structure, forms a complex with TatAy. Two types of complexes exist: one composed of TatAy and TatCy, and another composed only of TatAy.

Its subcellular location is the cell membrane. Functionally, part of the twin-arginine translocation (Tat) system that transports large folded proteins containing a characteristic twin-arginine motif in their signal peptide across membranes. Required for YwbN secretion. The protein is Sec-independent protein translocase protein TatCy of Bacillus subtilis (strain 168).